Reading from the N-terminus, the 1259-residue chain is Ankyrin repeat and sterile alpha motif domain-containing protein 1B (1259 aa).

ANK repeat units follow at residues 2 to 31 (GKDQ…GGIL), 58 to 87 (SGYT…STNV), 91 to 120 (KGYF…SHSR), 127 to 156 (ENET…DPTI), 160 to 189 (KLET…NLMS), 193 to 222 (RKHT…DVSC), and 225 to 254 (EKGS…DANI). The tract at residues 298–325 (HAQEDTAQETHLSSPAESPQKTKSETVT) is disordered. Residues 306 to 325 (ETHLSSPAESPQKTKSETVT) show a composition bias toward polar residues. 5 positions are modified to phosphoserine: S310, S311, S315, S353, and S364. 4 disordered regions span residues 367–401 (ELGK…SCGP), 490–513 (PGTS…SPDT), 556–614 (CTSF…GSSP), and 631–661 (TCED…EPSV). The span at 371-384 (NGSQSVRTSSTINL) shows a compositional bias: polar residues. Residue T503 is modified to Phosphothreonine. Phosphoserine occurs at positions 507 and 510. Residues 556 to 574 (CTSFTSSPAASPPTSSVET) show a composition bias toward low complexity. The segment covering 575 to 587 (TEVKNEGAEHADD) has biased composition (basic and acidic residues). S738 is subject to Phosphoserine. Residues 753–776 (VNWSKSSTAERSSKDNSERTPSFT) are disordered. T772 carries the post-translational modification Phosphothreonine. Residue S774 is modified to Phosphoserine. 2 consecutive SAM domains span residues 809 to 875 (CPVQ…LPKM) and 883 to 948 (YHPT…RLHD). Y900 carries the phosphotyrosine modification. H934 is a short sequence motif (nuclear localization signal). Residues 943–988 (GDRLHDDPPQKPPRSITLREPSGNHTPPQLSPSLSQSTYTTGGSLD) are disordered. Over residues 968–983 (TPPQLSPSLSQSTYTT) the composition is skewed to low complexity. Phosphoserine is present on S973. Y1006 carries the phosphotyrosine modification. A PID domain is found at 1055–1212 (IFQSCDYKAF…SFENKPSKPI (158 aa)). The tract at residues 1196–1216 (HSSTLPESFENKPSKPIPKPR) is disordered.

Interacts with EPHA8. Isoform 2 interacts with COIL.

It localises to the cytoplasm. The protein localises to the nucleus. The protein resides in the postsynaptic density. It is found in the cell projection. Its subcellular location is the dendritic spine. In terms of biological role, isoform 2 may participate in the regulation of nucleoplasmic coilin protein interactions in neuronal and transformed cells. The polypeptide is Ankyrin repeat and sterile alpha motif domain-containing protein 1B (Anks1b) (Mus musculus (Mouse)).